Reading from the N-terminus, the 846-residue chain is FNIP repeat-containing protein DDB_G0289381 (846 aa).

Residues 1–11 (MKLLSFKKKPS) show a composition bias toward basic residues. The tract at residues 1–39 (MKLLSFKKKPSLTKSQSCPDKLKNLKEQQKDPKNGANYD) is disordered. Residues 20–33 (DKLKNLKEQQKDPK) are compositionally biased toward basic and acidic residues. FNIP repeat units follow at residues 159-193 (IPNHIEKLIFSNEFDKPIKAGTIPQSVVEIEFGEK), 194-239 (FNQV…FGNN), 240-283 (FDQI…FQEN), and 284-325 (FNQP…YGGD). Positions 362–384 (SSISLDISGGGSGSGSGVNSTTT) are disordered. 3 FNIP repeats span residues 458–500 (FQQL…FGDG), 501–546 (FNQQ…FGKS), and 654–693 (FNQSIKNLPENLTSLSLGTSFSQNLINLPNSLIELKMFNK). The interval 702–734 (SNNNNENNNENNNENNNENNNENNNENNNNTNS) is disordered. Residues 702-734 (SNNNNENNNENNNENNNENNNENNNENNNNTNS) adopt a coiled-coil conformation.

The sequence is that of FNIP repeat-containing protein DDB_G0289381 from Dictyostelium discoideum (Social amoeba).